A 156-amino-acid chain; its full sequence is Small ribosomal subunit protein uS7 (156 aa).

This sequence belongs to the universal ribosomal protein uS7 family. Part of the 30S ribosomal subunit. Contacts proteins S9 and S11.

Functionally, one of the primary rRNA binding proteins, it binds directly to 16S rRNA where it nucleates assembly of the head domain of the 30S subunit. Is located at the subunit interface close to the decoding center, probably blocks exit of the E-site tRNA. This is Small ribosomal subunit protein uS7 from Methylococcus capsulatus (strain ATCC 33009 / NCIMB 11132 / Bath).